A 464-amino-acid polypeptide reads, in one-letter code: Mothers against decapentaplegic homolog 5 (464 aa).

Positions 13–137 (PAVKRLLGWK…YKRVESPVLP (125 aa)) constitute an MH1 domain. Positions 65, 110, 122, and 127 each coordinate Zn(2+). The segment at 166 to 258 (HMPLNATFPE…LAPQNMPRGD (93 aa)) is disordered. Over residues 173 to 183 (FPESFQQHSGG) the composition is skewed to polar residues. Low complexity predominate over residues 199-216 (ASSGTYPNSPASSGPSSP). Polar residues predominate over residues 237-251 (QDGSQSMETGSSLAP). The MH2 domain maps to 270–464 (WCSIVYYELN…SPLNPISSVS (195 aa)).

It belongs to the dwarfin/SMAD family. In terms of assembly, may form trimers with the co-SMAD SMAD4.

The protein localises to the cytoplasm. It is found in the nucleus. Functionally, involved in ventralization. May mediate Bmp2b signaling during early phases of embryonic dorsal-ventral pattern formation. Required for initiation of Smad1 expression during gastrulation. This Danio rerio (Zebrafish) protein is Mothers against decapentaplegic homolog 5 (smad5).